Reading from the N-terminus, the 191-residue chain is Chromobox protein homolog 5 (191 aa).

Residues S11, S12, S13, and S14 each carry the phosphoserine modification. In terms of domain architecture, Chromo 1 spans 20-78 (YVVEKVLDRRVVKGQVEYLLKWKGFSEEHNTWEPEKNLDCPELISEFMKKYKKMKEGEN). A Glycyl lysine isopeptide (Lys-Gly) (interchain with G-Cter in SUMO2) cross-link involves residue K32. K40 carries the N6-acetyllysine modification. The tract at residues 70 to 117 (YKKMKEGENNKPREKSESNKRKSNFSNSADDIKSKKKREQSNDIARGF) is disordered. The segment covering 73–89 (MKEGENNKPREKSESNK) has biased composition (basic and acidic residues). K91 is covalently cross-linked (Glycyl lysine isopeptide (Lys-Gly) (interchain with G-Cter in SUMO2)). Phosphoserine occurs at positions 92, 95, and 97. Glycyl lysine isopeptide (Lys-Gly) (interchain with G-Cter in SUMO2) cross-links involve residues K102, K106, K154, and K184. A Chromo 2; shadow subtype domain is found at 121–179 (LEPEKIIGATDSCGDLMFLMKWKDTDEADLVLAKEANVKCPQIVIAFYEERLTWHAYPE).

In terms of assembly, homodimer. Interacts with histone H3 methylated at 'Lys-9'. Interacts (via Chromo 2; shadow subtype domain) with the MIS12 complex subunit NSL1; the interaction is direct, involves dimeric CBX5, and occurs during interphase. Interacts with POGZ; POGZ and PXVXL motif-containing proteins such as INCENP and TRIM28 compete for interaction with CBX5. Interacts with LRIF1 (via PxVxL motif). Interacts with INCENP. Interacts with TRIM24. Interacts (via the chromoshadow domain) with ATRX; the interaction is direct. Interacts (via the chromoshadow domain) with CHAF1A; the interaction is direct. Interacts (via the chromoshadow domain) with LBR; the interaction is direct. Interacts (via the chromoshadow domain) with NIPBL; the interaction is direct. Interacts (via the chromoshadow domain) with SP100; the interaction is direct. Interacts (via the chromoshadow domain) with STAM2; the interaction is direct. Interacts (via the chromoshadow domain) with TRIM28; the interaction is direct. Interacts (via the chromoshadow domain) with CBX3; the interaction is direct. Interacts with PRR14 (via N-terminus). Interacts with RRP1B. Interacts with HNRNPU (via C-terminus); this interaction is, at least in part, RNA-dependent. Interacts with ZNF263; recruited to the SIX3 promoter along with other proteins involved in chromatin modification and transcriptional corepression where it contributes to transcriptional repression. Interacts with AURKB during mitosis. Interacts with CHAMP1. Interacts with BAHD1. Interacts with HP1BP3. Interacts with CHD3. Interacts with CHD4. Interacts with SMYD5. Interacts with KMT5B. Interacts with KMT5C. As to quaternary structure, (Microbial infection) Interacts with JC virus agnoprotein; this interaction induces the dissociation of CBX5 from LBR, resulting in destabilization of the nuclear envelope. In terms of processing, phosphorylation of HP1 and LBR may be responsible for some of the alterations in chromatin organization and nuclear structure which occur at various times during the cell cycle. Phosphorylated during interphase and possibly hyper-phosphorylated during mitosis. Ubiquitinated.

The protein localises to the nucleus. It localises to the chromosome. The protein resides in the centromere. In terms of biological role, component of heterochromatin that recognizes and binds histone H3 tails methylated at 'Lys-9' (H3K9me), leading to epigenetic repression. In contrast, it is excluded from chromatin when 'Tyr-41' of histone H3 is phosphorylated (H3Y41ph). May contribute to the association of heterochromatin with the inner nuclear membrane by interactions with the lamin-B receptor (LBR). Involved in the formation of kinetochore through interaction with the MIS12 complex subunit NSL1. Required for the formation of the inner centromere. The chain is Chromobox protein homolog 5 (CBX5) from Homo sapiens (Human).